We begin with the raw amino-acid sequence, 224 residues long: Small ribosomal subunit protein uS3 (224 aa).

The KH type-2 domain occupies 39-107 (IREFLKKKPS…DVWVEIAEVK (69 aa)).

It belongs to the universal ribosomal protein uS3 family. As to quaternary structure, part of the 30S ribosomal subunit. Forms a tight complex with proteins S10 and S14.

In terms of biological role, binds the lower part of the 30S subunit head. Binds mRNA in the 70S ribosome, positioning it for translation. In Chlamydia trachomatis serovar L2 (strain ATCC VR-902B / DSM 19102 / 434/Bu), this protein is Small ribosomal subunit protein uS3.